The chain runs to 450 residues: Benzene 1,2-dioxygenase subunit alpha (450 aa).

The 110-residue stretch at 54–163 (WLLLGHETQI…VETYKGLIFA (110 aa)) folds into the Rieske domain. Residues C96, H98, C116, and H119 each contribute to the [2Fe-2S] cluster site. Residues H222 and H228 each contribute to the Fe cation site.

It belongs to the bacterial ring-hydroxylating dioxygenase alpha subunit family. This dioxygenase system consists of four proteins: the two subunits of the hydroxylase component (BnzA and BnzB), a ferredoxin (BnzC) and a ferredoxin reductase (BnzD). The cofactor is [2Fe-2S] cluster. Fe cation is required as a cofactor.

The enzyme catalyses benzene + NADH + O2 + H(+) = cis-1,2-dihydrobenzene-1,2-diol + NAD(+). It catalyses the reaction toluene + NADH + O2 + H(+) = (1S,2R)-3-methylcyclohexa-3,5-diene-1,2-diol + NAD(+). The protein operates within aromatic compound metabolism; benzene degradation; catechol from benzene: step 1/2. Its pathway is xenobiotic degradation; toluene degradation. It functions in the pathway xenobiotic degradation; xylene degradation. Its function is as follows. Catalyzes both the oxidation of benzene and toluene. The protein is Benzene 1,2-dioxygenase subunit alpha (bnzA) of Pseudomonas putida (strain ATCC 700007 / DSM 6899 / JCM 31910 / BCRC 17059 / LMG 24140 / F1).